A 503-amino-acid chain; its full sequence is Glutamyl-tRNA(Gln) amidotransferase subunit A (503 aa).

Catalysis depends on charge relay system residues Lys79 and Ser154. The active-site Acyl-ester intermediate is the Ser178.

This sequence belongs to the amidase family. GatA subfamily. As to quaternary structure, heterotrimer of A, B and C subunits.

The enzyme catalyses L-glutamyl-tRNA(Gln) + L-glutamine + ATP + H2O = L-glutaminyl-tRNA(Gln) + L-glutamate + ADP + phosphate + H(+). In terms of biological role, allows the formation of correctly charged Gln-tRNA(Gln) through the transamidation of misacylated Glu-tRNA(Gln) in organisms which lack glutaminyl-tRNA synthetase. The reaction takes place in the presence of glutamine and ATP through an activated gamma-phospho-Glu-tRNA(Gln). This is Glutamyl-tRNA(Gln) amidotransferase subunit A from Agathobacter rectalis (strain ATCC 33656 / DSM 3377 / JCM 17463 / KCTC 5835 / VPI 0990) (Eubacterium rectale).